The chain runs to 119 residues: Neuropeptide B (119 aa).

Positions 1–21 (MVRCRTLVAAALALLLTPALA) are cleaved as a signal peptide. A propeptide spanning residues 53-119 (SESPALRVGT…SLHKAECQSA (67 aa)) is cleaved from the precursor.

This sequence belongs to the neuropeptide B/W family. In terms of tissue distribution, detected in a variety of tissues. High levels are found in the lymphoid organs, central nervous system, mammary gland and uterus.

It localises to the secreted. May be involved in the regulation of feeding, neuroendocrine system, memory and learning. May be involved in the afferent pain pathway. This is Neuropeptide B (Npb) from Rattus norvegicus (Rat).